A 392-amino-acid chain; its full sequence is Galactokinase (392 aa).

37–40 (EHTD) serves as a coordination point for substrate. Residues Ser-71 and 128-134 (GSGLSSS) each bind ATP. Mg(2+) is bound by residues Ser-134 and Glu-166. Asp-178 (proton acceptor) is an active-site residue. Substrate is bound at residue Tyr-228.

It belongs to the GHMP kinase family. GalK subfamily.

It localises to the cytoplasm. It carries out the reaction alpha-D-galactose + ATP = alpha-D-galactose 1-phosphate + ADP + H(+). It participates in carbohydrate metabolism; galactose metabolism. Its function is as follows. Catalyzes the transfer of the gamma-phosphate of ATP to D-galactose to form alpha-D-galactose-1-phosphate (Gal-1-P). This Streptococcus pneumoniae (strain ATCC BAA-255 / R6) protein is Galactokinase.